We begin with the raw amino-acid sequence, 1466 residues long: Collagen alpha-1(III) chain (1466 aa).

Residues 1–23 form the signal peptide; it reads MMSFVQKGSWLLLALLHPTIILA. Positions 24-153 are cleaved as a propeptide — N-terminal propeptide; sequence QQEAVEGGCS…CPTGPQNYSP (130 aa). The VWFC domain occupies 30–89; it reads GGCSHLGQSYADRDVWKPEPCQICVCDSGSVLCDDIICDDQELDCPNPEIPFGECCAVCP. The tract at residues 95–1194 is disordered; it reads PTRPPNGQGP…GPPGPPGAPG (1100 aa). A compositionally biased stretch (low complexity) spans 99–108; the sequence is PNGQGPQGPK. Over residues 146-155 the composition is skewed to polar residues; sequence TGPQNYSPQY. Positions 149–167 are nonhelical region (N-terminal); it reads QNYSPQYDSYDVKSGVAVG. Positions 168–1196 are triple-helical region; sequence GLAGYPGPAG…PGPPGAPGPC (1029 aa). 4-hydroxyproline is present on residues P173, P179, P182, P185, P191, P194, P197, P203, P206, P215, P218, P236, P239, P245, P248, P257, and P260. Over residues 175–185 the composition is skewed to pro residues; sequence PAGPPGPPGPP. Low complexity predominate over residues 187–199; it reads TSGHPGSPGSPGY. The span at 229 to 241 shows a compositional bias: basic and acidic residues; the sequence is KDGESGRPGRPGE. The span at 251–260 shows a compositional bias: low complexity; the sequence is KGPAGIPGFP. 5-hydroxylysine; alternate is present on K263. O-linked (Gal...) hydroxylysine; alternate glycosylation occurs at K263. Residues 266 to 277 are compositionally biased toward basic and acidic residues; the sequence is RGFDGRNGEKGE. Residue P281 is modified to 4-hydroxyproline. Position 284 is a 5-hydroxylysine (K284). 4-hydroxyproline occurs at positions 290, 296, 305, 311, 314, 332, 335, 338, 344, 347, 359, 365, 371, 383, 386, 392, 404, 407, 416, 425, 434, 443, 455, 458, 470, 473, 479, 488, 500, 512, 524, 530, 533, 539, 542, 545, 551, 554, 563, 566, 575, 581, 590, 599, 602, 608, 620, 635, 644, 650, 656, 659, 661, 668, 671, 680, 686, 692, 701, 703, 713, 716, 722, 728, 737, 746, 749, 755, 770, 776, 785, 788, 797, 806, 812, 815, 821, 830, 839, 845, and 854. Residues 311–322 show a composition bias toward low complexity; that stretch reads PGLPGAAGARGN. The segment covering 355-380 has biased composition (low complexity); sequence PAGSPGSNGAPGQRGEPGPQGHAGAQ. Residues 390 to 399 are compositionally biased toward gly residues; the sequence is GSPGGKGEMG. The span at 404-425 shows a compositional bias: low complexity; sequence PGAPGLMGARGPPGPAGANGAP. Over residues 426 to 435 the composition is skewed to gly residues; sequence GLRGGAGEPG. Residues 478 to 523 are compositionally biased toward low complexity; the sequence is LPGAAGERGAPGFRGPAGPNGIPGEKGPAGERGAPGPAGPRGAAGE. Residues 528–549 are compositionally biased toward gly residues; that stretch reads GVPGGPGMRGMPGSPGGPGSDG. Residues 642–651 show a composition bias toward gly residues; sequence GLPGTGGPPG. Over residues 669–678 the composition is skewed to gly residues; the sequence is GAPGGKGDAG. The segment covering 679-692 has biased composition (low complexity); that stretch reads APGERGPPGLAGAP. Positions 693-711 are enriched in gly residues; that stretch reads GLRGGAGPPGPEGGKGAAG. Residues 729–738 show a composition bias toward gly residues; it reads GERGGLGSPG. A compositionally biased stretch (low complexity) spans 787 to 796; the sequence is LPGIAGPRGS. A compositionally biased stretch (basic and acidic residues) spans 823–835; sequence GKGERGAPGEKGE. Over residues 836 to 850 the composition is skewed to gly residues; it reads GGPPGVAGPPGGSGP. Position 860 is a 5-hydroxylysine (K860). The segment covering 864-873 has biased composition (gly residues); the sequence is GSPGGPGAAG. 4-hydroxyproline occurs at positions 866, 869, 875, 881, 884, 890, 892, 899, 905, 914, 917, 929, 935, 941, and 944. The span at 890–907 shows a compositional bias: pro residues; the sequence is PGPPGPSGSPGKDGPPGP. Residues 908 to 917 are compositionally biased toward low complexity; sequence AGNTGAPGSP. A compositionally biased stretch (low complexity) spans 946 to 961; that stretch reads PLGIAGITGARGLAGP. 4-hydroxyproline occurs at positions 962, 965, and 971. At K977 the chain carries 5-hydroxylysine. 4-hydroxyproline occurs at positions 983, 995, 1001, 1010, 1016, 1022, 1028, 1040, 1043, 1046, 1049, 1052, 1076, and 1085. Pro residues predominate over residues 1046–1055; it reads PGHPGPPGPV. Residues 1067 to 1085 are compositionally biased toward low complexity; that stretch reads SGPAGPAGAPGPAGSRGAP. At K1106 the chain carries 5-hydroxylysine. A 4-hydroxyproline mark is found at P1112, P1115, P1118, P1121, P1133, P1148, P1157, P1163, P1178, P1181, P1184, P1187, P1190, and P1193. A compositionally biased stretch (low complexity) spans 1123 to 1133; that stretch reads PAGQQGAIGSP. The span at 1181 to 1193 shows a compositional bias: pro residues; the sequence is PGQPGPPGPPGAP. Residues 1197–1205 form a nonhelical region (C-terminal) region; sequence CGGVGAAAI. Residues 1222–1466 constitute a propeptide, C-terminal propeptide; it reads DEPMDFKINT…GVDVGPVCFL (245 aa). The Fibrillar collagen NC1 domain maps to 1232–1466; the sequence is DEIMTSLKSV…GVDVGPVCFL (235 aa). 3 disulfides stabilise this stretch: C1262/C1294, C1302/C1464, and C1372/C1417. Residues D1280, N1282, Q1283, C1285, and D1288 each contribute to the Ca(2+) site.

It belongs to the fibrillar collagen family. Trimers of identical alpha 1(III) chains. The chains are linked to each other by interchain disulfide bonds. Trimers are also cross-linked via hydroxylysines. Interacts with ADGRG1. Post-translationally, proline residues at the third position of the tripeptide repeating unit (G-X-Y) are hydroxylated in some or all of the chains. In terms of processing, O-linked glycan consists of a Glc-Gal disaccharide bound to the oxygen atom of a post-translationally added hydroxyl group.

The protein localises to the secreted. It is found in the extracellular space. The protein resides in the extracellular matrix. Collagen type III occurs in most soft connective tissues along with type I collagen. Involved in regulation of cortical development. Is the major ligand of ADGRG1 in the developing brain and binding to ADGRG1 inhibits neuronal migration and activates the RhoA pathway by coupling ADGRG1 to GNA13 and possibly GNA12. This chain is Collagen alpha-1(III) chain (COL3A1), found in Homo sapiens (Human).